Here is a 410-residue protein sequence, read N- to C-terminus: 2-epi-5-epi-valiolone synthase (410 aa).

NAD(+) contacts are provided by residues Asp66, 97 to 100, 130 to 134, 154 to 155, Lys167, Lys176, and 194 to 197; these read ETLK, GVLMD, TT, and FLAT. Lys167 is a catalytic residue. Positions 209, 280, and 296 each coordinate a divalent metal cation.

The protein belongs to the sugar phosphate cyclases superfamily. EEVS family. It depends on NAD(+) as a cofactor. Co(2+) serves as cofactor.

The catalysed reaction is D-sedoheptulose 7-phosphate = 2-epi-5-epi-valiolone + phosphate. In terms of biological role, catalyzes the cyclization of D-sedoheptulose 7-phosphate to 2-epi-5-epi-valiolone. Involved in salbostatin biosynthesis. This is 2-epi-5-epi-valiolone synthase from Streptomyces albus (strain ATCC 21838 / DSM 41398 / FERM P-419 / JCM 4703 / NBRC 107858).